Consider the following 935-residue polypeptide: LPS-assembly protein LptD (935 aa).

The N-terminal stretch at 1-33 (MALKSPAFRRKFPLLVTGGLLALQPLATSYVVA) is a signal peptide. The tract at residues 52-85 (KTPVNNLPPRPVHEGAAVSSGTEAAGEAETADRP) is disordered. A compositionally biased stretch (low complexity) spans 65-79 (EGAAVSSGTEAAGEA).

The protein belongs to the LptD family. Component of the lipopolysaccharide transport and assembly complex. Interacts with LptE and LptA.

It localises to the cell outer membrane. Together with LptE, is involved in the assembly of lipopolysaccharide (LPS) at the surface of the outer membrane. This chain is LPS-assembly protein LptD, found in Pseudomonas putida (strain ATCC 700007 / DSM 6899 / JCM 31910 / BCRC 17059 / LMG 24140 / F1).